We begin with the raw amino-acid sequence, 183 residues long: Maltose O-acetyltransferase (183 aa).

Position 83 (Asn-83) interacts with acetyl-CoA. The active-site Proton donor/acceptor is His-113. Acetyl-CoA contacts are provided by residues Gly-140, Ser-158, 163 to 164, Arg-178, and Lys-181; that span reads TK.

The protein belongs to the transferase hexapeptide repeat family. Homodimer.

The enzyme catalyses D-maltose + acetyl-CoA = 1-O-acetylmaltose + CoA. Catalyzes the CoA-dependent transfer of an acetyl group to maltose and other sugars. Acetylates glucose exclusively at the C6 position and maltose at the C6 position of the non-reducing end glucosyl moiety. Is able to acetylate maltooligosaccharides. The polypeptide is Maltose O-acetyltransferase (maa) (Escherichia coli (strain K12)).